The chain runs to 264 residues: Zinc finger protein CG30 (264 aa).

The segment at 8–63 adopts an RING-type zinc-finger fold; that stretch reads CNICFSVAEIKNYFLQPIDRLTIIPVLELDTCKHQLCSMCIRKIRKRKKVPCPLCR.

It is found in the host nucleus. Its function is as follows. Plays a role in the proper expression of late and very late genes. This Autographa californica nuclear polyhedrosis virus (AcMNPV) protein is Zinc finger protein CG30 (CG30).